The following is a 414-amino-acid chain: Autophagy-related protein 18 (414 aa).

WD repeat units follow at residues 1 to 36, 69 to 114, 185 to 225, and 230 to 269; these read MAMNFVTFNQDYSYLAVATSKGFRIFTTDPFAKSYE, KRQS…LLYT, AHRS…KLYQ, and SIPSRIYSMSFNTTSTLLCVSSSTETIHLFKLSHQTSSRE. The short motif at 226–230 is the L/FRRG motif element; that stretch reads FRRGS. Positions 261-314 are disordered; that stretch reads LSHQTSSREGSPSSALSRERAASQSSLGTSPDPDDPTDDMESSEIASRKHNGTL. A compositionally biased stretch (polar residues) spans 262–289; that stretch reads SHQTSSREGSPSSALSRERAASQSSLGT. Over residues 292–302 the composition is skewed to acidic residues; sequence DPDDPTDDMES. WD repeat units lie at residues 309 to 355 and 367 to 407; these read KHNG…AWIK and GNAG…GGEG.

Belongs to the WD repeat PROPPIN family. As to quaternary structure, component of the PI(3,5)P2 regulatory complex.

It localises to the preautophagosomal structure membrane. The protein localises to the vacuole membrane. The protein resides in the endosome membrane. Its function is as follows. The PI(3,5)P2 regulatory complex regulates both the synthesis and turnover of phosphatidylinositol 3,5-bisphosphate (PtdIns(3,5)P2). Necessary for proper vacuole morphology. Plays an important role in osmotically-induced vacuole fragmentation. Required for cytoplasm to vacuole transport (Cvt) vesicle formation, pexophagy and starvation-induced autophagy. Involved in correct atg9 trafficking to the pre-autophagosomal structure. Might also be involved in premeiotic DNA replication. This chain is Autophagy-related protein 18 (atg18), found in Aspergillus terreus (strain NIH 2624 / FGSC A1156).